Reading from the N-terminus, the 266-residue chain is Probable septum site-determining protein MinC (266 aa).

The tract at residues Ile98–Gln146 is disordered. The segment covering Asp109–Lys124 has biased composition (basic and acidic residues).

This sequence belongs to the MinC family. In terms of assembly, interacts with MinD and FtsZ.

Its function is as follows. Cell division inhibitor that blocks the formation of polar Z ring septums. Rapidly oscillates between the poles of the cell to destabilize FtsZ filaments that have formed before they mature into polar Z rings. Prevents FtsZ polymerization. This Allorhizobium ampelinum (strain ATCC BAA-846 / DSM 112012 / S4) (Agrobacterium vitis (strain S4)) protein is Probable septum site-determining protein MinC.